The following is a 513-amino-acid chain: MLLAELAEVSRAVAATPARLEKIARLADALGRLAPDERAVGASWLAGDLPGGRVGIGAATLRAALEAAPPERSGPGLTVAEVDAALRRIAAVAGPGSGAARRRELDALLARAGNPERRFLAALVLGELRQGALEGVLADAVAKAAGLPAAEVRRAAMLAGALPPVAEAALSEGAAGLARFRLRVGEPVSPMLAQTAADVDEALRALGGEAALEWKLDGARIQAHRDGEAVRVFSRSLRDVTAAVPEVVALLRAAPEPRLVLDGEAIALRADGTPEPFQVTMRRFGRKLDVERLAPELPLTAFFFDALVAGGAELLARPERERWAALARAIPAERRVPRLVTRDPAEARAFLEDALARGQEGVVAKALDAPYEAGRRGAAWLKVKRAHTLDLVVLAAEWGSGRRRGWLSNLHLGARDPASGGFVMLGKTFKGMTDAMLAWQTDRLKALATGPLDAWQVPVRPELVVEVAFDGIQSSPRYPGGLALRFARVKRYREDKRPEDADTIETVRGLYGG.

Residue glutamate 213 coordinates ATP. The active-site N6-AMP-lysine intermediate is the lysine 215. ATP is bound by residues arginine 220, arginine 235, glutamate 264, phenylalanine 304, arginine 376, and lysine 382.

It belongs to the ATP-dependent DNA ligase family. Mg(2+) is required as a cofactor.

The enzyme catalyses ATP + (deoxyribonucleotide)n-3'-hydroxyl + 5'-phospho-(deoxyribonucleotide)m = (deoxyribonucleotide)n+m + AMP + diphosphate.. Functionally, DNA ligase that seals nicks in double-stranded DNA during DNA replication, DNA recombination and DNA repair. The chain is Probable DNA ligase from Anaeromyxobacter dehalogenans (strain 2CP-C).